Here is a 137-residue protein sequence, read N- to C-terminus: Fluoride-specific ion channel FluC (137 aa).

4 helical membrane passes run 11-31 (IAVS…SLWF), 42-62 (GTLF…ALAL), 75-95 (LIAV…LDTF), and 107-127 (GFYW…GIIL). Residues G82 and T85 each contribute to the Na(+) site.

The protein belongs to the fluoride channel Fluc/FEX (TC 1.A.43) family.

Its subcellular location is the cell inner membrane. The catalysed reaction is fluoride(in) = fluoride(out). Its activity is regulated as follows. Na(+) is not transported, but it plays an essential structural role and its presence is essential for fluoride channel function. In terms of biological role, fluoride-specific ion channel. Important for reducing fluoride concentration in the cell, thus reducing its toxicity. This Trichormus variabilis (strain ATCC 29413 / PCC 7937) (Anabaena variabilis) protein is Fluoride-specific ion channel FluC.